The primary structure comprises 454 residues: Inactive tetrahydroanabasine acetyltransferase pauper allele (454 aa).

Belongs to the plant acyltransferase family. Monomer.

This Lupinus albus (White lupine) protein is Inactive tetrahydroanabasine acetyltransferase pauper allele.